Here is a 276-residue protein sequence, read N- to C-terminus: 5'-nucleotidase SurE (276 aa).

Positions 14, 15, 46, and 104 each coordinate a divalent metal cation.

The protein belongs to the SurE nucleotidase family. It depends on a divalent metal cation as a cofactor.

Its subcellular location is the cytoplasm. The catalysed reaction is a ribonucleoside 5'-phosphate + H2O = a ribonucleoside + phosphate. Its function is as follows. Nucleotidase that shows phosphatase activity on nucleoside 5'-monophosphates. This chain is 5'-nucleotidase SurE, found in Crocosphaera subtropica (strain ATCC 51142 / BH68) (Cyanothece sp. (strain ATCC 51142)).